Consider the following 90-residue polypeptide: Co-chaperonin GroES (90 aa).

Belongs to the GroES chaperonin family. In terms of assembly, heptamer of 7 subunits arranged in a ring. Interacts with the chaperonin GroEL.

It is found in the cytoplasm. In terms of biological role, together with the chaperonin GroEL, plays an essential role in assisting protein folding. The GroEL-GroES system forms a nano-cage that allows encapsulation of the non-native substrate proteins and provides a physical environment optimized to promote and accelerate protein folding. GroES binds to the apical surface of the GroEL ring, thereby capping the opening of the GroEL channel. This is Co-chaperonin GroES from Phocaeicola vulgatus (strain ATCC 8482 / DSM 1447 / JCM 5826 / CCUG 4940 / NBRC 14291 / NCTC 11154) (Bacteroides vulgatus).